The primary structure comprises 125 residues: Histone H2A (125 aa).

Positions 1–18 (MSGRGKGGKAKGKSKSRS) are enriched in basic residues. Residues 1-23 (MSGRGKGGKAKGKSKSRSSRAGL) form a disordered region. Ser2 carries the post-translational modification N-acetylserine. Ser2 is modified (phosphoserine). N5-methylglutamine is present on Gln104.

The protein belongs to the histone H2A family. As to quaternary structure, the nucleosome is a histone octamer containing two molecules each of H2A, H2B, H3 and H4 assembled in one H3-H4 heterotetramer and two H2A-H2B heterodimers. The octamer wraps approximately 147 bp of DNA.

The protein localises to the nucleus. Its subcellular location is the chromosome. In terms of biological role, core component of nucleosome. Nucleosomes wrap and compact DNA into chromatin, limiting DNA accessibility to the cellular machineries which require DNA as a template. Histones thereby play a central role in transcription regulation, DNA repair, DNA replication and chromosomal stability. DNA accessibility is regulated via a complex set of post-translational modifications of histones, also called histone code, and nucleosome remodeling. This chain is Histone H2A, found in Urechis caupo (Innkeeper worm).